The chain runs to 341 residues: 4-hydroxy-2-oxovalerate aldolase (341 aa).

The Pyruvate carboxyltransferase domain maps to 9-259 (VRITEVCLRD…KLDIDLYKMM (251 aa)). 17-18 (RD) provides a ligand contact to substrate. Aspartate 18 contributes to the Mn(2+) binding site. Catalysis depends on histidine 21, which acts as the Proton acceptor. Substrate-binding residues include serine 171 and histidine 198. Positions 198 and 200 each coordinate Mn(2+). Tyrosine 289 is a binding site for substrate.

Belongs to the 4-hydroxy-2-oxovalerate aldolase family.

It carries out the reaction (S)-4-hydroxy-2-oxopentanoate = acetaldehyde + pyruvate. In Bacillus thuringiensis (strain Al Hakam), this protein is 4-hydroxy-2-oxovalerate aldolase.